The chain runs to 744 residues: Potassium-transporting ATPase ATP-binding subunit (744 aa).

4 helical membrane-spanning segments follow: residues 80-100, 108-128, 265-285, and 310-330; these read PVMFVVYIGSILTTLLWVMAL, AGFILAVSVWLWFTVLFANVA, LALTILLVSLTIILLLATVTL, and VLVALLVCLIPTTIGGLLSAI. Catalysis depends on D363, which acts as the 4-aspartylphosphate intermediate. Residues D400, E404, 435–442, and K457 contribute to the ATP site; that span reads FSAQTRMS. Residues D580 and D584 each contribute to the Mg(2+) site. Transmembrane regions (helical) follow at residues 650 to 670, 678 to 698, and 724 to 744; these read FAIIPAAFATTYPQLAALNVM, AVMSAVIFNALIIVFLIPLAL, and LLLPFPGIKLIDMFLAAMGWV.

The protein belongs to the cation transport ATPase (P-type) (TC 3.A.3) family. Type IA subfamily. In terms of assembly, the system is composed of three essential subunits: KdpA, KdpB and KdpC.

The protein resides in the cell inner membrane. It catalyses the reaction K(+)(out) + ATP + H2O = K(+)(in) + ADP + phosphate + H(+). In terms of biological role, part of the high-affinity ATP-driven potassium transport (or Kdp) system, which catalyzes the hydrolysis of ATP coupled with the electrogenic transport of potassium into the cytoplasm. This subunit is responsible for energy coupling to the transport system and for the release of the potassium ions to the cytoplasm. The sequence is that of Potassium-transporting ATPase ATP-binding subunit from Ralstonia nicotianae (strain ATCC BAA-1114 / GMI1000) (Ralstonia solanacearum).